Here is a 545-residue protein sequence, read N- to C-terminus: Lysine--tRNA ligase (545 aa).

Residues 33–41 (VSGLQHIGR) carry the 'HIGH' region motif. A 'KMSKS' region motif is present at residues 288 to 292 (DMSSS).

Belongs to the class-I aminoacyl-tRNA synthetase family.

Its subcellular location is the cytoplasm. The enzyme catalyses tRNA(Lys) + L-lysine + ATP = L-lysyl-tRNA(Lys) + AMP + diphosphate. This chain is Lysine--tRNA ligase (lysS), found in Aeropyrum pernix (strain ATCC 700893 / DSM 11879 / JCM 9820 / NBRC 100138 / K1).